The chain runs to 134 residues: UPF0357 protein AAL017W (134 aa).

The first 23 residues, 1–23 (MFGLISLWHLFWLAVMAGILVVA), serve as a signal peptide directing secretion.

Belongs to the UPF0357 family.

This is UPF0357 protein AAL017W from Eremothecium gossypii (strain ATCC 10895 / CBS 109.51 / FGSC 9923 / NRRL Y-1056) (Yeast).